A 120-amino-acid chain; its full sequence is MANPTQIYSRDSKWRRGVMRSLVSELLLHGRIQTTLTRAKEVRGHAEKLITKAKAQSLASRRHAASFLRPLVTKDNKTLLQELFDTIAPKYKDRPGGYTRIYKLPKRDGDSTRMALIELV.

Belongs to the bacterial ribosomal protein bL17 family. As to quaternary structure, part of the 50S ribosomal subunit. Contacts protein L32.

In Mycoplasmopsis synoviae (strain 53) (Mycoplasma synoviae), this protein is Large ribosomal subunit protein bL17.